The chain runs to 57 residues: UPF0391 membrane protein RPC_3278 (57 aa).

The next 2 membrane-spanning stretches (helical) occupy residues 4-24 (WVIT…GGIA) and 30-50 (IAKI…VVGL).

Belongs to the UPF0391 family.

The protein localises to the cell membrane. The sequence is that of UPF0391 membrane protein RPC_3278 from Rhodopseudomonas palustris (strain BisB18).